The sequence spans 253 residues: 5-oxoprolinase subunit A (253 aa).

This sequence belongs to the LamB/PxpA family. Forms a complex composed of PxpA, PxpB and PxpC.

The catalysed reaction is 5-oxo-L-proline + ATP + 2 H2O = L-glutamate + ADP + phosphate + H(+). Catalyzes the cleavage of 5-oxoproline to form L-glutamate coupled to the hydrolysis of ATP to ADP and inorganic phosphate. In Bacillus cereus (strain ZK / E33L), this protein is 5-oxoprolinase subunit A.